A 206-amino-acid polypeptide reads, in one-letter code: Large ribosomal subunit protein uL4 (206 aa).

Residues 45–78 are disordered; that stretch reads QGNRAQKDREQVKHTTKKPWRQKGTGRARAGMSS. The span at 58–70 shows a compositional bias: basic residues; sequence HTTKKPWRQKGTG.

It belongs to the universal ribosomal protein uL4 family. Part of the 50S ribosomal subunit.

One of the primary rRNA binding proteins, this protein initially binds near the 5'-end of the 23S rRNA. It is important during the early stages of 50S assembly. It makes multiple contacts with different domains of the 23S rRNA in the assembled 50S subunit and ribosome. In terms of biological role, forms part of the polypeptide exit tunnel. In Burkholderia ambifaria (strain MC40-6), this protein is Large ribosomal subunit protein uL4.